Reading from the N-terminus, the 335-residue chain is tRNA N6-adenosine threonylcarbamoyltransferase (335 aa).

Residues His-111 and His-115 each contribute to the Fe cation site. Substrate is bound by residues 133–137 (LISGG), Asp-166, Gly-179, and Asn-276. Asp-301 provides a ligand contact to Fe cation.

This sequence belongs to the KAE1 / TsaD family. It depends on Fe(2+) as a cofactor.

Its subcellular location is the cytoplasm. It catalyses the reaction L-threonylcarbamoyladenylate + adenosine(37) in tRNA = N(6)-L-threonylcarbamoyladenosine(37) in tRNA + AMP + H(+). Functionally, required for the formation of a threonylcarbamoyl group on adenosine at position 37 (t(6)A37) in tRNAs that read codons beginning with adenine. Is involved in the transfer of the threonylcarbamoyl moiety of threonylcarbamoyl-AMP (TC-AMP) to the N6 group of A37, together with TsaE and TsaB. TsaD likely plays a direct catalytic role in this reaction. In Wolbachia pipientis wMel, this protein is tRNA N6-adenosine threonylcarbamoyltransferase.